Reading from the N-terminus, the 46-residue chain is uncharacterized protein (46 aa).

This is an uncharacterized protein from Saccharomyces cerevisiae (strain ATCC 204508 / S288c) (Baker's yeast).